The sequence spans 275 residues: Succinate dehydrogenase [ubiquinone] iron-sulfur subunit, mitochondrial (275 aa).

Residues 1-24 (MFSRRIQVLSPFLKHFVNRNARMM) constitute a mitochondrion transit peptide. A 2Fe-2S ferredoxin-type domain is found at 57–137 (PEVKPKLQKY…PTKIYPLPHC (81 aa)). Residues C98, C103, C106, and C118 each contribute to the [2Fe-2S] cluster site. The 4Fe-4S ferredoxin-type domain occupies 178–208 (DRAKLDGLYECILCACCSTSCPSYWWNSEEY). Residues C188, C191, and C194 each contribute to the [4Fe-4S] cluster site. C198 lines the [3Fe-4S] cluster pocket. A ubiquinone is bound at residue W203. Positions 245 and 251 each coordinate [3Fe-4S] cluster. C255 contributes to the [4Fe-4S] cluster binding site.

The protein belongs to the succinate dehydrogenase/fumarate reductase iron-sulfur protein family. As to quaternary structure, component of complex II composed of four subunits: a flavoprotein (FP), an iron-sulfur protein (IP), and a cytochrome b composed of a large and a small subunit. The cofactor is [2Fe-2S] cluster. It depends on [3Fe-4S] cluster as a cofactor. [4Fe-4S] cluster serves as cofactor.

The protein resides in the mitochondrion inner membrane. It carries out the reaction a quinone + succinate = fumarate + a quinol. Its pathway is carbohydrate metabolism; tricarboxylic acid cycle; fumarate from succinate (eukaryal route): step 1/1. Iron-sulfur protein (IP) subunit of succinate dehydrogenase (SDH) that is involved in complex II of the mitochondrial electron transport chain and is responsible for transferring electrons from succinate to ubiquinone (coenzyme Q). The sequence is that of Succinate dehydrogenase [ubiquinone] iron-sulfur subunit, mitochondrial (sdh2) from Schizosaccharomyces pombe (strain 972 / ATCC 24843) (Fission yeast).